Here is a 151-residue protein sequence, read N- to C-terminus: uncharacterized protein (151 aa).

Transmembrane regions (helical) follow at residues 12–32, 59–79, and 114–134; these read LAYFIDGIIVSVPSYIILFII, LAFLPTMLIMIVISVLYYGLL, and YFAYILSGIIFYIGFIMIAFG.

Its subcellular location is the cell membrane. This is an uncharacterized protein from Bacillus subtilis (strain 168).